The following is a 171-amino-acid chain: uncharacterized protein (171 aa).

Residues 123–171 form a disordered region; sequence CTKRDLRNDPPPAYQPDDPLKDLRKNFEKKEKPTWNDVEKKKNGVFEFH. A compositionally biased stretch (basic and acidic residues) spans 140–171; the sequence is DPLKDLRKNFEKKEKPTWNDVEKKKNGVFEFH.

This is an uncharacterized protein from Caenorhabditis elegans.